Consider the following 426-residue polypeptide: Mothers against decapentaplegic homolog 7 (426 aa).

The tract at residues 14–40 (WRSRAPGGEDEEEGVGGGGGGGGLRGE) is disordered. Gly residues predominate over residues 28 to 39 (VGGGGGGGGLRG). 2 positions are modified to N6-acetyllysine; alternate: K64 and K70. Glycyl lysine isopeptide (Lys-Gly) (interchain with G-Cter in ubiquitin); alternate cross-links involve residues K64 and K70. The region spanning 64 to 207 (KAVRGAKGHH…LSRLCELESP (144 aa)) is the MH1 domain. Basic residues predominate over residues 67-76 (RGAKGHHHPH). The disordered stretch occupies residues 67-88 (RGAKGHHHPHPPSSGAGAAGGA). The Zn(2+) site is built by C125, C180, C192, and H197. The PY-motif motif lies at 208 to 211 (PPPY). Positions 208 to 217 (PPPYSRYPMD) are important for interaction with SMURF2. A Phosphoserine modification is found at S249. An MH2 domain is found at 261 to 426 (WCVVAYWEEK…CWLEVIFNSR (166 aa)).

It belongs to the dwarfin/SMAD family. In terms of assembly, interacts with COPS5. Interacts with STAMBP. Interacts with NEDD4L. Interacts with RNF111, AXIN1 and AXIN2. Interacts with PPP1R15A. Interacts with ACVR1B, SMURF1, SMURF2 and TGFBR1; SMAD7 recruits SMURF1 and SMURF2 to the TGF-beta receptor and regulates its degradation. Interacts with WWP1. Interacts with PDPK1 (via PH domain). Interacts with TSC22D1/TSC-22; the interaction requires TGF-beta and the interaction is inhibited by TGFBR1. Post-translationally, phosphorylation on Ser-249 does not affect its stability, nuclear localization or inhibitory function in TGFB signaling; however it affects its ability to regulate transcription. Phosphorylated by PDPK1. In terms of processing, ubiquitinated by WWP1. Polyubiquitinated by RNF111, which is enhanced by AXIN1 and promotes proteasomal degradation. In response to TGF-beta, ubiquitinated by SMURF1; which promotes its degradation. Acetylation prevents ubiquitination and degradation mediated by SMURF1. Ubiquitous.

It localises to the nucleus. Its subcellular location is the cytoplasm. Antagonist of signaling by TGF-beta (transforming growth factor) type 1 receptor superfamily members; has been shown to inhibit TGF-beta (Transforming growth factor) and activin signaling by associating with their receptors thus preventing SMAD2 access. Functions as an adapter to recruit SMURF2 to the TGF-beta receptor complex. Also acts by recruiting the PPP1R15A-PP1 complex to TGFBR1, which promotes its dephosphorylation. Positively regulates PDPK1 kinase activity by stimulating its dissociation from the 14-3-3 protein YWHAQ which acts as a negative regulator. The protein is Mothers against decapentaplegic homolog 7 (Smad7) of Rattus norvegicus (Rat).